Reading from the N-terminus, the 754-residue chain is MTTQLRYENNDDDERVEYNLFTNRSTMMANFEEWIKMATDNKINSRNSWNFALIDYFYDLDVLKDGENNINFQKASATLDGCIKIYSSRVDSVTTETGKLLSGLAQRKTNGASNGDDSNGGNGEGLGGDSDEANIEIDPLTGMPISNDPDVNNTRRRVYNRVLETTLVEFETIKMKELDQELIIDPLFKKALVDFDEGGAKSLLLNTLNIDNTARVIFDASIKDTQNVGQGKLQRKEEELIERDSLVDDENEPSQSLISTRNDSTVNDSVISAPSMEDEILSLGMDFIKFDQIAVCEISGSIEQLRNVVEDINQAKDFIENVNNRFDNFLTEEELQAAVPDNAEDDSDGFDMGMQQELCYPDENHDNTSHDEQDDDNVNSTTGSIFEKDLMAYFDENLNRNWRGREHWKVRNFKKANLVNKESDLLEETRTTIGDTTDKNTTDDKSMDTKKKHKQKKVLEIDFFKTDDSFEDKVFASKGRTKIDMPIKNRKNDTHYLLPDDFHFSTDRITRLFIKPGQKMSLFSHRKHTRGDVSSGLFEKSTVSANHSNNDIPTIADEHFWADNYERKEQEEKEKEQSKEVGDVVGGALDNPFEDDMDGVDFNQAFEGTDDNEEASVKLDLQDDEDHKFPIRENKVTYSRVSKKVDVRRLKKNVWRSINNLIQEHDSRKNREQSSNDSETHTEDESTKELKFSDIIQGISKMYSDDTLKDISTSFCFICLLHLANEHGLQITHTENYNDLIVNYEDLATTQAAS.

The segment at 104-149 is disordered; it reads LAQRKTNGASNGDDSNGGNGEGLGGDSDEANIEIDPLTGMPISNDP. The span at 118–128 shows a compositional bias: gly residues; sequence SNGGNGEGLGG. The residue at position 245 (Ser-245) is a Phosphoserine. Positions 359 to 379 are disordered; sequence CYPDENHDNTSHDEQDDDNVN. Positions 362-371 are enriched in basic and acidic residues; sequence DENHDNTSHD. Ser-548 carries the phosphoserine modification. The interval 665–688 is disordered; the sequence is HDSRKNREQSSNDSETHTEDESTK.

It belongs to the CND2 (condensin subunit 2) family. Component of the condensin complex, which contains the SMC2 and SMC4 heterodimer, and three non SMC subunits that probably regulate the complex: BRN1, YCS4 and YCG1/YCS5.

The protein localises to the nucleus. The protein resides in the cytoplasm. Its subcellular location is the chromosome. Its function is as follows. Regulatory subunit of the condensin complex, a complex required for conversion of interphase chromatin into mitotic-like condense chromosomes. The condensin complex probably introduces positive supercoils into relaxed DNA in the presence of type I topoisomerases and converts nicked DNA into positive knotted forms in the presence of type II topoisomerases. The condensin complex probably also plays a role during interphase. The sequence is that of Condensin complex subunit 2 (BRN1) from Saccharomyces cerevisiae (strain ATCC 204508 / S288c) (Baker's yeast).